The following is a 782-amino-acid chain: Ribosome biogenesis protein ERB1 (782 aa).

Basic residues predominate over residues 1 to 11 (MSVNSRKRKVA). A disordered region spans residues 1 to 120 (MSVNSRKRKV…LEGEEDESLK (120 aa)). 2 stretches are compositionally biased toward acidic residues: residues 39–51 (DESEDDQDAEDTD) and 59–75 (LSDEDFEDEEDSGDEAE). A compositionally biased stretch (polar residues) spans 82-92 (RNLNTSGGSQQ). Over residues 106-117 (GADGELEGEEDE) the composition is skewed to acidic residues. 2 WD repeats span residues 432 to 471 (GQEGRVRCVSVDPQGIFVASGGDDGYVRIWELLTGRQVWN) and 475 to 516 (SDEE…PDVE). Residues 533 to 556 (KPSTAANGEAPKQSPGKWSRPGSR) form a disordered region. 4 WD repeats span residues 612–652 (RLKG…KILQ), 653–692 (PGAKWISSIDVHPGGDNIIVGTYDKRLLWHDLDLSNKPYK), 696–736 (FHKE…DLME), and 752–782 (KSRLGVMDLDWHPREPWCVSAGADGTLRLWN).

The protein belongs to the WD repeat BOP1/ERB1 family. As to quaternary structure, component of the NOP7 complex, composed of ERB1, NOP7 and YTM1. The complex is held together by ERB1, which interacts with NOP7 via its N-terminal domain and with YTM1 via a high-affinity interaction between the seven-bladed beta-propeller domains of the 2 proteins. The NOP7 complex associates with the 66S pre-ribosome.

The protein resides in the nucleus. Its subcellular location is the nucleolus. It localises to the nucleoplasm. In terms of biological role, component of the NOP7 complex, which is required for maturation of the 25S and 5.8S ribosomal RNAs and formation of the 60S ribosome. The chain is Ribosome biogenesis protein ERB1 from Phaeosphaeria nodorum (strain SN15 / ATCC MYA-4574 / FGSC 10173) (Glume blotch fungus).